A 175-amino-acid polypeptide reads, in one-letter code: MLPAYLSNPFAAVFGGGKPIDGGRTYKDGRRILGDGKTYRGLFSGIFCGFIAGCIEIWLSSRGFEIMGINMPVFGPDYKSALIVVLALASGALFGDMFKSFFKRRMGLKRGASLPLVDQLDFVVGAWVFTYLVAPEWFVSNFTHGIMLTVIIITPLLHLTTNIIGYLIGVKKEPW.

Helical transmembrane passes span 41 to 61 (GLFS…WLSS), 82 to 102 (LIVV…KSFF), 122 to 142 (FVVG…VSNF), and 150 to 170 (VIII…LIGV).

The protein belongs to the CDP-archaeol synthase family. The cofactor is Mg(2+).

Its subcellular location is the cell membrane. The enzyme catalyses 2,3-bis-O-(geranylgeranyl)-sn-glycerol 1-phosphate + CTP + H(+) = CDP-2,3-bis-O-(geranylgeranyl)-sn-glycerol + diphosphate. It participates in membrane lipid metabolism; glycerophospholipid metabolism. In terms of biological role, catalyzes the formation of CDP-2,3-bis-(O-geranylgeranyl)-sn-glycerol (CDP-archaeol) from 2,3-bis-(O-geranylgeranyl)-sn-glycerol 1-phosphate (DGGGP) and CTP. This reaction is the third ether-bond-formation step in the biosynthesis of archaeal membrane lipids. The sequence is that of CDP-archaeol synthase from Methanosarcina barkeri (strain Fusaro / DSM 804).